We begin with the raw amino-acid sequence, 354 residues long: Ferrochelatase (354 aa).

Residues histidine 214 and glutamate 295 each coordinate Fe cation.

The protein belongs to the ferrochelatase family.

Its subcellular location is the cytoplasm. It carries out the reaction heme b + 2 H(+) = protoporphyrin IX + Fe(2+). The protein operates within porphyrin-containing compound metabolism; protoheme biosynthesis; protoheme from protoporphyrin-IX: step 1/1. Its function is as follows. Catalyzes the ferrous insertion into protoporphyrin IX. The sequence is that of Ferrochelatase from Burkholderia ambifaria (strain ATCC BAA-244 / DSM 16087 / CCUG 44356 / LMG 19182 / AMMD) (Burkholderia cepacia (strain AMMD)).